Reading from the N-terminus, the 63-residue chain is Cecropin-2 (63 aa).

The signal sequence occupies residues 1–23 (MNFYKVFIFVALILAISLGQSEA). At Arg62 the chain carries Arginine amide.

Belongs to the cecropin family.

Its subcellular location is the secreted. Functionally, cecropins have lytic and antibacterial activity against several Gram-positive and Gram-negative bacteria. In Drosophila virilis (Fruit fly), this protein is Cecropin-2 (Cec2A).